The chain runs to 166 residues: Phosphopantetheine adenylyltransferase (166 aa).

Thr-10 contributes to the substrate binding site. ATP is bound by residues 10 to 11 and His-18; that span reads TF. Residues Lys-42, Leu-75, and Arg-89 each contribute to the substrate site. Residues 90-92, Glu-100, and 125-131 contribute to the ATP site; these read GVR and YTYVAST.

It belongs to the bacterial CoaD family. In terms of assembly, homohexamer. The cofactor is Mg(2+).

The protein resides in the cytoplasm. It catalyses the reaction (R)-4'-phosphopantetheine + ATP + H(+) = 3'-dephospho-CoA + diphosphate. Its pathway is cofactor biosynthesis; coenzyme A biosynthesis; CoA from (R)-pantothenate: step 4/5. Functionally, reversibly transfers an adenylyl group from ATP to 4'-phosphopantetheine, yielding dephospho-CoA (dPCoA) and pyrophosphate. This chain is Phosphopantetheine adenylyltransferase, found in Chlorobaculum parvum (strain DSM 263 / NCIMB 8327) (Chlorobium vibrioforme subsp. thiosulfatophilum).